Here is a 276-residue protein sequence, read N- to C-terminus: Large ribosomal subunit protein uL2 (276 aa).

The tract at residues Arg221–Lys276 is disordered.

The protein belongs to the universal ribosomal protein uL2 family. Part of the 50S ribosomal subunit. Forms a bridge to the 30S subunit in the 70S ribosome.

Its function is as follows. One of the primary rRNA binding proteins. Required for association of the 30S and 50S subunits to form the 70S ribosome, for tRNA binding and peptide bond formation. It has been suggested to have peptidyltransferase activity; this is somewhat controversial. Makes several contacts with the 16S rRNA in the 70S ribosome. The protein is Large ribosomal subunit protein uL2 of Brevibacillus brevis (strain 47 / JCM 6285 / NBRC 100599).